A 282-amino-acid chain; its full sequence is NADPH-dependent 7-cyano-7-deazaguanine reductase (282 aa).

88-90 (IES) is a substrate binding site. 90 to 91 (SK) contacts NADPH. The active-site Thioimide intermediate is C190. Catalysis depends on D197, which acts as the Proton donor. 229–230 (HE) serves as a coordination point for substrate. Residue 258 to 259 (RG) participates in NADPH binding.

It belongs to the GTP cyclohydrolase I family. QueF type 2 subfamily. Homodimer.

Its subcellular location is the cytoplasm. The catalysed reaction is 7-aminomethyl-7-carbaguanine + 2 NADP(+) = 7-cyano-7-deazaguanine + 2 NADPH + 3 H(+). The protein operates within tRNA modification; tRNA-queuosine biosynthesis. Functionally, catalyzes the NADPH-dependent reduction of 7-cyano-7-deazaguanine (preQ0) to 7-aminomethyl-7-deazaguanine (preQ1). The sequence is that of NADPH-dependent 7-cyano-7-deazaguanine reductase from Salmonella heidelberg (strain SL476).